Consider the following 226-residue polypeptide: Large ribosomal subunit protein uL1 (226 aa).

This sequence belongs to the universal ribosomal protein uL1 family. In terms of assembly, part of the 50S ribosomal subunit.

Its function is as follows. Binds directly to 23S rRNA. The L1 stalk is quite mobile in the ribosome, and is involved in E site tRNA release. Protein L1 is also a translational repressor protein, it controls the translation of the L11 operon by binding to its mRNA. This chain is Large ribosomal subunit protein uL1, found in Borreliella burgdorferi (strain ZS7) (Borrelia burgdorferi).